The sequence spans 231 residues: Endonuclease NucS (231 aa).

The protein belongs to the NucS endonuclease family.

The protein resides in the cytoplasm. In terms of biological role, cleaves both 3' and 5' ssDNA extremities of branched DNA structures. The protein is Endonuclease NucS of Kocuria rhizophila (strain ATCC 9341 / DSM 348 / NBRC 103217 / DC2201).